The following is a 359-amino-acid chain: Large ribosomal subunit protein uL3 (359 aa).

Residues 336–359 are disordered; that stretch reads VRPPAKRPPAEAPQITYISRESKQ.

This sequence belongs to the universal ribosomal protein uL3 family. Part of the 50S ribosomal subunit. Forms a cluster with proteins L14 and L24e.

In terms of biological role, one of the primary rRNA binding proteins, it binds directly near the 3'-end of the 23S rRNA, where it nucleates assembly of the 50S subunit. This is Large ribosomal subunit protein uL3 from Thermococcus sibiricus (strain DSM 12597 / MM 739).